The following is a 288-amino-acid chain: Quinate/shikimate dehydrogenase (288 aa).

Substrate-binding residues include Lys71 and Asp107. NAD(+) is bound by residues 132-135 (AGGA), 155-158 (NRKD), Lys205, 232-235 (CVYN), and Gly255.

It belongs to the shikimate dehydrogenase family. Homodimer.

The catalysed reaction is L-quinate + NAD(+) = 3-dehydroquinate + NADH + H(+). It catalyses the reaction L-quinate + NADP(+) = 3-dehydroquinate + NADPH + H(+). It carries out the reaction shikimate + NADP(+) = 3-dehydroshikimate + NADPH + H(+). The enzyme catalyses shikimate + NAD(+) = 3-dehydroshikimate + NADH + H(+). It participates in metabolic intermediate biosynthesis; chorismate biosynthesis; chorismate from D-erythrose 4-phosphate and phosphoenolpyruvate: step 4/7. In terms of biological role, the actual biological function of YdiB remains unclear, nor is it known whether 3-dehydroshikimate or quinate represents the natural substrate. Catalyzes the reversible NAD-dependent reduction of both 3-dehydroshikimate (DHSA) and 3-dehydroquinate to yield shikimate (SA) and quinate, respectively. It can use both NAD or NADP for catalysis, however it has higher catalytic efficiency with NAD. The polypeptide is Quinate/shikimate dehydrogenase (Salmonella agona (strain SL483)).